Consider the following 1229-residue polypeptide: Alpha,alpha-trehalose-phosphate synthase [UDP-forming] 2 (1229 aa).

A disordered region spans residues 196-233 (VSSDSEGEEAIHNVRSGTHTESESEEDPKAPRSGLATS). Over residues 213 to 225 (THTESESEEDPKA) the composition is skewed to basic and acidic residues.

The protein in the N-terminal section; belongs to the glycosyltransferase 20 family. This sequence in the C-terminal section; belongs to the gob-1 trehalose phosphatase family.

The catalysed reaction is D-glucose 6-phosphate + UDP-alpha-D-glucose = alpha,alpha-trehalose 6-phosphate + UDP + H(+). In terms of biological role, catalyzes the production of trehalose from glucose-6-phosphate and UDP-alpha-D-glucose in a 2 step process. The protein is Alpha,alpha-trehalose-phosphate synthase [UDP-forming] 2 (tps-2) of Caenorhabditis elegans.